A 397-amino-acid chain; its full sequence is Digeranylgeranylglycerophospholipid reductase (397 aa).

FAD is bound by residues Ala15, Glu34, Cys45, Gly46, Gly48, Arg101, Ala125, Glu163, Asp284, Gly296, and Ile297. A 2,3-bis-O-(geranylgeranyl)-sn-glycerol 1-phospholipid contacts are provided by Lys339 and Val375.

The protein belongs to the geranylgeranyl reductase family. DGGGPL reductase subfamily. Requires FAD as cofactor.

It catalyses the reaction 2,3-bis-O-(phytanyl)-sn-glycerol 1-phosphate + 8 NADP(+) = 2,3-bis-O-(geranylgeranyl)-sn-glycerol 1-phosphate + 8 NADPH + 8 H(+). The enzyme catalyses 2,3-bis-O-(phytanyl)-sn-glycerol 1-phosphate + 8 NAD(+) = 2,3-bis-O-(geranylgeranyl)-sn-glycerol 1-phosphate + 8 NADH + 8 H(+). It carries out the reaction a 2,3-bis-O-phytanyl-sn-glycerol 1-phospholipid + 8 A = a 2,3-bis-O-(geranylgeranyl)-sn-glycerol 1-phospholipid + 8 AH2. The catalysed reaction is CDP-2,3-bis-O-(geranylgeranyl)-sn-glycerol + 8 AH2 = CDP-2,3-bis-O-(phytanyl)-sn-glycerol + 8 A. It catalyses the reaction archaetidylserine + 8 AH2 = 2,3-bis-O-phytanyl-sn-glycero-3-phospho-L-serine + 8 A. It functions in the pathway membrane lipid metabolism; glycerophospholipid metabolism. Its function is as follows. Is involved in the reduction of 2,3-digeranylgeranylglycerophospholipids (unsaturated archaeols) into 2,3-diphytanylglycerophospholipids (saturated archaeols) in the biosynthesis of archaeal membrane lipids. Catalyzes the formation of archaetidic acid (2,3-di-O-phytanyl-sn-glyceryl phosphate) from 2,3-di-O-geranylgeranylglyceryl phosphate (DGGGP) via the hydrogenation of each double bond of the isoprenoid chains. Is also probably able to reduce double bonds of geranyl groups in CDP-2,3-bis-O-(geranylgeranyl)-sn-glycerol and archaetidylserine, thus acting at various stages in the biosynthesis of archaeal membrane lipids. This chain is Digeranylgeranylglycerophospholipid reductase, found in Picrophilus torridus (strain ATCC 700027 / DSM 9790 / JCM 10055 / NBRC 100828 / KAW 2/3).